The primary structure comprises 319 residues: Probable NAD(P)H-dependent D-xylose reductase xyl1 (319 aa).

Tyr-50 serves as the catalytic Proton donor. His-112 provides a ligand contact to substrate. NAD(+)-binding positions include 166 to 167, 215 to 224, and 271 to 281; these read SN, SSFGPLSFLE, and KSNNPTRLSQN.

Belongs to the aldo/keto reductase family.

The enzyme catalyses xylitol + NAD(+) = D-xylose + NADH + H(+). The catalysed reaction is xylitol + NADP(+) = D-xylose + NADPH + H(+). Its pathway is carbohydrate metabolism; D-xylose degradation. In terms of biological role, catalyzes the initial reaction in the xylose utilization pathway by reducing D-xylose into xylitol. Xylose is a major component of hemicelluloses such as xylan. Most fungi utilize D-xylose via three enzymatic reactions, xylose reductase (XR), xylitol dehydrogenase (XDH), and xylulokinase, to form xylulose 5-phosphate, which enters pentose phosphate pathway. The sequence is that of Probable NAD(P)H-dependent D-xylose reductase xyl1 (xyl1) from Aspergillus oryzae (strain ATCC 42149 / RIB 40) (Yellow koji mold).